The primary structure comprises 439 residues: Xaa-Pro dipeptidase (439 aa).

5 residues coordinate Mn(2+): Asp244, Asp255, His335, Glu380, and Glu419.

It belongs to the peptidase M24B family. Bacterial-type prolidase subfamily. The cofactor is Mn(2+).

The enzyme catalyses Xaa-L-Pro dipeptide + H2O = an L-alpha-amino acid + L-proline. Its function is as follows. Splits dipeptides with a prolyl residue in the C-terminal position. This is Xaa-Pro dipeptidase from Shewanella sediminis (strain HAW-EB3).